A 185-amino-acid polypeptide reads, in one-letter code: ATP synthase subunit delta (185 aa).

Belongs to the ATPase delta chain family. As to quaternary structure, F-type ATPases have 2 components, F(1) - the catalytic core - and F(0) - the membrane proton channel. F(1) has five subunits: alpha(3), beta(3), gamma(1), delta(1), epsilon(1). CF(0) has four main subunits: a(1), b(1), b'(1) and c(10-14). The alpha and beta chains form an alternating ring which encloses part of the gamma chain. F(1) is attached to F(0) by a central stalk formed by the gamma and epsilon chains, while a peripheral stalk is formed by the delta, b and b' chains.

The protein localises to the cell inner membrane. Its function is as follows. F(1)F(0) ATP synthase produces ATP from ADP in the presence of a proton or sodium gradient. F-type ATPases consist of two structural domains, F(1) containing the extramembraneous catalytic core and F(0) containing the membrane proton channel, linked together by a central stalk and a peripheral stalk. During catalysis, ATP synthesis in the catalytic domain of F(1) is coupled via a rotary mechanism of the central stalk subunits to proton translocation. Functionally, this protein is part of the stalk that links CF(0) to CF(1). It either transmits conformational changes from CF(0) to CF(1) or is implicated in proton conduction. The protein is ATP synthase subunit delta of Gloeobacter violaceus (strain ATCC 29082 / PCC 7421).